Consider the following 265-residue polypeptide: RNA-binding protein 7 (265 aa).

Glycine 2 carries the N-acetylglycine modification. An RRM domain is found at 10 to 87 (RTLFVGNLET…RPIKIQFRSG (78 aa)). ZCCHC8 binding stretches follow at residues 25 to 35 (LLFELFHQAGP) and 59 to 76 (HEVSVPYAMNLLNGIKLF). The disordered stretch occupies residues 91–125 (ASQDASVSYPQHHVGNLSPTSTSPNSYERTVGNVS). Polar residues predominate over residues 107 to 125 (LSPTSTSPNSYERTVGNVS). Serine 136 carries the phosphoserine; by MAPKAPK2 modification. Serine 137 carries the phosphoserine modification. Arginine 152 is modified (omega-N-methylarginine). Disordered stretches follow at residues 166–224 (DQLG…HGSD) and 237–265 (DDRNHDGWSHDYDNRRDSSRGGKWPSSRH). The span at 170 to 196 (FSPSAQPHGHTFNQSSSSQWRQDALSS) shows a compositional bias: polar residues. The residue at position 203 (serine 203) is a Phosphoserine. Basic and acidic residues-rich tracts occupy residues 207–224 (LADRHYSREQRYSDHGSD) and 237–256 (DDRNHDGWSHDYDNRRDSSR).

In terms of assembly, component of the nuclear exosome targeting (NEXT) complex composed of MTREX, ZCCHC8, and RBM7 that directs a subset of non-coding short-lived RNAs for exosomal degradation. Interacts with ZCCHC8 and SF3B2/SAP145. Binds to MTREX through ZCCHC8. Interacts with YWHAE and YWHAZ; these interactions are stress-dependent and RBM7 phosphorylation dependent; release RNA from the NEXT complex and may affect RNA targeting to the nuclear RNA exosomome for degradation. Interacts with MEPCE and LARP7, the core subunits of 7SK snRNP; upon genotoxic stress this interaction is enhanced, triggering the release of inactive P-TEFb complex from the core and P-TEFb complex activation. Phosphorylated at Ser-136 by MAPK14/p38-alpha-activated MAPKAPK2/MK2; this phosphorylation is stress-dependent; this phosphorylation decreases its RNA-binding capacity therefore affecting RNA nuclear exosome-mediated degradation. This phosphorylation mediates YWHAE and YWHAZ interactions.

It localises to the nucleus. The protein localises to the nucleoplasm. Its function is as follows. RNA-binding subunit of the trimeric nuclear exosome targeting (NEXT) complex, a complex that functions as an RNA exosome cofactor that directs a subset of non-coding short-lived RNAs for exosomal degradation. NEXT is involved in surveillance and turnover of aberrant transcripts and non-coding RNAs. Binds preferentially polyuridine sequences and associates with newly synthesized RNAs, including pre-mRNAs and short-lived exosome substrates such as promoter upstream transcripts (PROMPTs), enhancer RNAs (eRNAs), and 3'-extended products from small nuclear RNAs (snRNAs). Participates in several biological processes including DNA damage response (DDR) and stress response. During stress response, activation of the p38MAPK-MK2 pathway decreases RBM7-RNA-binding and subsequently the RNA exosome degradation activities, thereby modulating the turnover of non-coding transcriptome. Participates in DNA damage response (DDR), through its interaction with MEPCE and LARP7, the core subunits of 7SK snRNP complex, that release the positive transcription elongation factor b (P-TEFb) complex from the 7SK snRNP. In turn, activation of P-TEFb complex induces the transcription of P-TEFb-dependent DDR genes to promote cell viability. The chain is RNA-binding protein 7 from Mus musculus (Mouse).